The chain runs to 137 residues: Protein MGF 110-7L (137 aa).

An N-terminal signal peptide occupies residues 1 to 20 (MLVIILGVIGLLASSNLVSS). N-linked (GlcNAc...) asparagine; by host glycosylation is found at Asn69, Asn70, and Asn105.

Belongs to the asfaviruses V110 family.

The chain is Protein MGF 110-7L from Ornithodoros (relapsing fever ticks).